A 278-amino-acid chain; its full sequence is ATP synthase subunit delta (278 aa).

It belongs to the ATPase delta chain family. In terms of assembly, F-type ATPases have 2 components, F(1) - the catalytic core - and F(0) - the membrane proton channel. F(1) has five subunits: alpha(3), beta(3), gamma(1), delta(1), epsilon(1). F(0) has three main subunits: a(1), b(2) and c(10-14). The alpha and beta chains form an alternating ring which encloses part of the gamma chain. F(1) is attached to F(0) by a central stalk formed by the gamma and epsilon chains, while a peripheral stalk is formed by the delta and b chains.

It localises to the cell membrane. Functionally, f(1)F(0) ATP synthase produces ATP from ADP in the presence of a proton or sodium gradient. F-type ATPases consist of two structural domains, F(1) containing the extramembraneous catalytic core and F(0) containing the membrane proton channel, linked together by a central stalk and a peripheral stalk. During catalysis, ATP synthesis in the catalytic domain of F(1) is coupled via a rotary mechanism of the central stalk subunits to proton translocation. In terms of biological role, this protein is part of the stalk that links CF(0) to CF(1). It either transmits conformational changes from CF(0) to CF(1) or is implicated in proton conduction. The sequence is that of ATP synthase subunit delta from Bifidobacterium longum subsp. infantis (strain ATCC 15697 / DSM 20088 / JCM 1222 / NCTC 11817 / S12).